The sequence spans 94 residues: Elongation factor 1-beta (94 aa).

It belongs to the EF-1-beta/EF-1-delta family.

In terms of biological role, promotes the exchange of GDP for GTP in EF-1-alpha/GDP, thus allowing the regeneration of EF-1-alpha/GTP that could then be used to form the ternary complex EF-1-alpha/GTP/AAtRNA. The sequence is that of Elongation factor 1-beta from Ignicoccus hospitalis (strain KIN4/I / DSM 18386 / JCM 14125).